The primary structure comprises 208 residues: Holliday junction branch migration complex subunit RuvA (208 aa).

Residues 1–67 (MIGWLHGTIG…EDGQQLYGFE (67 aa)) form a domain I region. The segment at 68–146 (TKADRNLFRL…ERWQQQGGST (79 aa)) is domain II. Positions 147-157 (PLRLVEPVAES) are flexible linker. Residues 157–208 (SRELRATLEALGYGPEEVSAAVAQAGSQGLDPEQPMEEWLRHCLAWLSRQAG) form a domain III region.

Belongs to the RuvA family. In terms of assembly, homotetramer. Forms an RuvA(8)-RuvB(12)-Holliday junction (HJ) complex. HJ DNA is sandwiched between 2 RuvA tetramers; dsDNA enters through RuvA and exits via RuvB. An RuvB hexamer assembles on each DNA strand where it exits the tetramer. Each RuvB hexamer is contacted by two RuvA subunits (via domain III) on 2 adjacent RuvB subunits; this complex drives branch migration. In the full resolvosome a probable DNA-RuvA(4)-RuvB(12)-RuvC(2) complex forms which resolves the HJ.

It localises to the cytoplasm. Its function is as follows. The RuvA-RuvB-RuvC complex processes Holliday junction (HJ) DNA during genetic recombination and DNA repair, while the RuvA-RuvB complex plays an important role in the rescue of blocked DNA replication forks via replication fork reversal (RFR). RuvA specifically binds to HJ cruciform DNA, conferring on it an open structure. The RuvB hexamer acts as an ATP-dependent pump, pulling dsDNA into and through the RuvAB complex. HJ branch migration allows RuvC to scan DNA until it finds its consensus sequence, where it cleaves and resolves the cruciform DNA. This is Holliday junction branch migration complex subunit RuvA from Synechococcus sp. (strain RCC307).